The primary structure comprises 886 residues: uncharacterized protein (886 aa).

Residues 1–20 form the signal peptide; that stretch reads MKILKSLVLLVLFIVMPAKA. 6 helical membrane-spanning segments follow: residues 520–540, 563–583, 609–629, 647–667, 680–700, and 771–791; these read VIIFGLMFVAGTLKLTAIEVI, TYFFSVFTDGIDFFITNVVGA, LLFIELLQIHNGLAFIAIITI, IIAFIGVTVMISLAPFFIILM, ISTLLSYVVQPTILLIFFLLI, and FLVLFTTALLFYVYCLMSYGL.

This sequence belongs to the TrbL/VirB6 family.

It is found in the cell membrane. This is an uncharacterized protein from Rickettsia typhi (strain ATCC VR-144 / Wilmington).